A 410-amino-acid polypeptide reads, in one-letter code: 3-phosphoshikimate 1-carboxyvinyltransferase (410 aa).

Lys27, Ser28, and Arg32 together coordinate 3-phosphoshikimate. Lys27 contacts phosphoenolpyruvate. Phosphoenolpyruvate is bound by residues Gly91 and Arg119. Residues Ser161, Ser162, Gln163, Asp297, Gln319, and Lys323 each coordinate 3-phosphoshikimate. Position 163 (Gln163) interacts with phosphoenolpyruvate. The Proton acceptor role is filled by Asp297. Phosphoenolpyruvate-binding residues include Arg327, Arg368, and Lys394.

The protein belongs to the EPSP synthase family. In terms of assembly, monomer.

It localises to the cytoplasm. It catalyses the reaction 3-phosphoshikimate + phosphoenolpyruvate = 5-O-(1-carboxyvinyl)-3-phosphoshikimate + phosphate. It participates in metabolic intermediate biosynthesis; chorismate biosynthesis. Catalyzes the transfer of the enolpyruvyl moiety of phosphoenolpyruvate (PEP) to the 5-hydroxyl of shikimate-3-phosphate (S3P) to produce enolpyruvyl shikimate-3-phosphate and inorganic phosphate. The sequence is that of 3-phosphoshikimate 1-carboxyvinyltransferase from Pyrococcus abyssi (strain GE5 / Orsay).